The following is a 735-amino-acid chain: Transcription initiation factor IIF subunit alpha (735 aa).

6 disordered regions span residues 1–68 (MSRR…EYAE), 165–263 (EYKK…TANL), 297–323 (NEPE…AKRG), 446–465 (KAVA…NSEV), 471–606 (EEFA…HKEP), and 631–674 (PEGE…EETP). The span at 33–54 (RMRMGQNGSNSSSPGVPNGDNS) shows a compositional bias: low complexity. 2 stretches are compositionally biased toward basic and acidic residues: residues 59 to 68 (VKKDDPEYAE) and 165 to 174 (EYKKKAEQER). The segment covering 175–219 (STPNSGGMNKSGTVSLNNTVKDGSQTPTVDSVTKDNTANGVNSSI) has biased composition (polar residues). Serine 198 is modified (phosphoserine). Threonine 200 carries the post-translational modification Phosphothreonine. Residues 220-238 (PTVTGSSVPPASPTTVSAV) show a composition bias toward low complexity. Positions 239 to 263 (ESNGLSNGSTSAANGLDGNASTANL) are enriched in polar residues. Acidic residues-rich tracts occupy residues 453–465 (AMDE…NSEV) and 471–480 (EEFADDEEAP). A compositionally biased stretch (basic and acidic residues) spans 487-500 (QENKESEQRIKKEM). The span at 513–522 (APSENEEDEL) shows a compositional bias: acidic residues. Serine 515 bears the Phosphoserine mark. Basic and acidic residues predominate over residues 523 to 536 (FGEKKIDEDGERIK). Serine 560, serine 562, and serine 571 each carry phosphoserine. Positions 564–583 (IENKENESPVKKEEDSDTLS) are enriched in basic and acidic residues. Residues 584–595 (KSKRSSPKKQQK) are compositionally biased toward basic residues. The span at 636 to 654 (NPQTTKAVDSSNNASNTVP) shows a compositional bias: polar residues. Position 655 is a phosphoserine (serine 655).

This sequence belongs to the TFIIF alpha subunit family. As to quaternary structure, TFIIF is composed of three different subunits: TFG1/RAP74, TFG2/RAP30 and TAF14. Phosphorylated on Ser and other residues by TAF1 and casein kinase II-like kinases.

The protein localises to the nucleus. Its function is as follows. TFIIF is a general transcription initiation factor that binds to RNA polymerase II. Its functions include the recruitment of RNA polymerase II to the promoter bound DNA-TBP-TFIIB complex, decreasing the affinity of RNA polymerase II for non-specific DNA, allowing for the subsequent recruitment of TFIIE and TFIIH, and facilitating RNA polymerase II elongation. This chain is Transcription initiation factor IIF subunit alpha (TFG1), found in Saccharomyces cerevisiae (strain ATCC 204508 / S288c) (Baker's yeast).